A 341-amino-acid chain; its full sequence is S-adenosylmethionine:tRNA ribosyltransferase-isomerase (341 aa).

The protein belongs to the QueA family. In terms of assembly, monomer.

It is found in the cytoplasm. The catalysed reaction is 7-aminomethyl-7-carbaguanosine(34) in tRNA + S-adenosyl-L-methionine = epoxyqueuosine(34) in tRNA + adenine + L-methionine + 2 H(+). It participates in tRNA modification; tRNA-queuosine biosynthesis. In terms of biological role, transfers and isomerizes the ribose moiety from AdoMet to the 7-aminomethyl group of 7-deazaguanine (preQ1-tRNA) to give epoxyqueuosine (oQ-tRNA). In Staphylococcus aureus (strain Mu3 / ATCC 700698), this protein is S-adenosylmethionine:tRNA ribosyltransferase-isomerase.